A 211-amino-acid polypeptide reads, in one-letter code: Uridine kinase (211 aa).

ATP is bound at residue Gly-12–Thr-19.

The protein belongs to the uridine kinase family.

The protein resides in the cytoplasm. The enzyme catalyses uridine + ATP = UMP + ADP + H(+). It catalyses the reaction cytidine + ATP = CMP + ADP + H(+). It functions in the pathway pyrimidine metabolism; CTP biosynthesis via salvage pathway; CTP from cytidine: step 1/3. The protein operates within pyrimidine metabolism; UMP biosynthesis via salvage pathway; UMP from uridine: step 1/1. In Bacillus velezensis (strain DSM 23117 / BGSC 10A6 / LMG 26770 / FZB42) (Bacillus amyloliquefaciens subsp. plantarum), this protein is Uridine kinase.